A 140-amino-acid chain; its full sequence is Small ribosomal subunit protein bS6 (140 aa).

The interval 96–140 (VTGQSEMLKAEENRSERRERRERPENAESNDGDDSDSNDSDNADE) is disordered. Positions 103-121 (LKAEENRSERRERRERPEN) are enriched in basic and acidic residues. Over residues 123–140 (ESNDGDDSDSNDSDNADE) the composition is skewed to acidic residues.

Belongs to the bacterial ribosomal protein bS6 family.

Its function is as follows. Binds together with bS18 to 16S ribosomal RNA. In Ectopseudomonas mendocina (strain ymp) (Pseudomonas mendocina), this protein is Small ribosomal subunit protein bS6.